Reading from the N-terminus, the 67-residue chain is Large ribosomal subunit protein uL29 (67 aa).

Belongs to the universal ribosomal protein uL29 family.

This Cereibacter sphaeroides (strain ATCC 17025 / ATH 2.4.3) (Rhodobacter sphaeroides) protein is Large ribosomal subunit protein uL29.